The chain runs to 187 residues: Probable carboxylesterase Culp7 (187 aa).

C15 and C69 are oxidised to a cystine. The active-site Nucleophile is the S80. A disulfide bridge connects residues C151 and C158. D155 is a catalytic residue. H167 (proton donor/acceptor) is an active-site residue.

Belongs to the cutinase family.

Its subcellular location is the cytoplasm. It is found in the cell membrane. The protein resides in the secreted. It localises to the cell wall. May have a role in cell wall processes. Does not exhibit cutinase activity. This chain is Probable carboxylesterase Culp7, found in Mycobacterium tuberculosis (strain ATCC 25618 / H37Rv).